A 477-amino-acid chain; its full sequence is Bifunctional protein HldE (477 aa).

A ribokinase region spans residues 1–318 (MKVTLPDFRR…ENAIRGRADT (318 aa)). 195 to 198 (NLSE) contacts ATP. The active site involves Asp-264. Residues 344 to 477 (MTNGVFDILH…INIIRQGQND (134 aa)) form a cytidylyltransferase region.

In the N-terminal section; belongs to the carbohydrate kinase PfkB family. It in the C-terminal section; belongs to the cytidylyltransferase family. As to quaternary structure, homodimer.

The enzyme catalyses D-glycero-beta-D-manno-heptose 7-phosphate + ATP = D-glycero-beta-D-manno-heptose 1,7-bisphosphate + ADP + H(+). It carries out the reaction D-glycero-beta-D-manno-heptose 1-phosphate + ATP + H(+) = ADP-D-glycero-beta-D-manno-heptose + diphosphate. It participates in nucleotide-sugar biosynthesis; ADP-L-glycero-beta-D-manno-heptose biosynthesis; ADP-L-glycero-beta-D-manno-heptose from D-glycero-beta-D-manno-heptose 7-phosphate: step 1/4. It functions in the pathway nucleotide-sugar biosynthesis; ADP-L-glycero-beta-D-manno-heptose biosynthesis; ADP-L-glycero-beta-D-manno-heptose from D-glycero-beta-D-manno-heptose 7-phosphate: step 3/4. In terms of biological role, catalyzes the phosphorylation of D-glycero-D-manno-heptose 7-phosphate at the C-1 position to selectively form D-glycero-beta-D-manno-heptose-1,7-bisphosphate. Catalyzes the ADP transfer from ATP to D-glycero-beta-D-manno-heptose 1-phosphate, yielding ADP-D-glycero-beta-D-manno-heptose. The protein is Bifunctional protein HldE of Edwardsiella ictaluri (strain 93-146).